The sequence spans 137 residues: Peptide methionine sulfoxide reductase MsrB (137 aa).

The MsrB domain maps to 7–129 (PDHPATELNE…NSASLSFTDG (123 aa)). 4 residues coordinate Zn(2+): cysteine 46, cysteine 49, cysteine 95, and cysteine 98. Cysteine 118 serves as the catalytic Nucleophile.

The protein belongs to the MsrB Met sulfoxide reductase family. It depends on Zn(2+) as a cofactor.

The enzyme catalyses L-methionyl-[protein] + [thioredoxin]-disulfide + H2O = L-methionyl-(R)-S-oxide-[protein] + [thioredoxin]-dithiol. The chain is Peptide methionine sulfoxide reductase MsrB from Serratia proteamaculans (strain 568).